A 570-amino-acid chain; its full sequence is Glycine--tRNA ligase (570 aa).

The substrate site is built by Arg99 and Glu165. ATP contacts are provided by residues 197-199 (RNE), 207-212 (LRLREF), 324-325 (EC), and 443-446 (GIDR). 212–216 (FTQAE) is a substrate binding site. 439–443 (EPSFG) contributes to the substrate binding site.

This sequence belongs to the class-II aminoacyl-tRNA synthetase family.

The protein resides in the cytoplasm. The catalysed reaction is tRNA(Gly) + glycine + ATP = glycyl-tRNA(Gly) + AMP + diphosphate. Functionally, catalyzes the attachment of glycine to tRNA(Gly). This is Glycine--tRNA ligase from Thermococcus kodakarensis (strain ATCC BAA-918 / JCM 12380 / KOD1) (Pyrococcus kodakaraensis (strain KOD1)).